An 875-amino-acid chain; its full sequence is MSTTSIESNNDIGRSVKTIGVYSIGPEIGKGSFATVYKCFNTKTNESVAIKSVVRSKLKSKKLVENLEIEISILKTMKHPHIVGLLDYKQTTSHFHLVMDYCSMGDLSYFIRKRNQLIKTHPVISSLLERYPSPEGSHGLNEVLVIHFLKQLVSALEFLRNKSLVHRDIKPQNLLLCPPLHSKQEFKDGGFVGLWELPLLKIADFGFARFLPSTSMAETLCGSPLYMAPEILRYEKYNAKADLWSVGAVLYEMTVGKPPFRADNHVQLLKNIEKSNDRIKFPSAAQVPESLKRLIRSLLKYNPTERVSFNEFFNDPLIVNDLEGNDEPLETSEMDENLFISEYISPIKSSQKSQYIEPITTEVAVKEKSKQDLPAREVSTHASESQTKAVDTRPSSRDEEIKEIINKNSPGPETSRSIQPHNLKEKSLVLKNKDNDIILERDYVVVEKRAVEVNAIADELAHAGSGAVAINPRRTSSGSDNSYNGPNNMQLYRRPSLRSNSSGSQRRPSFTDRRISISISPTNALTKAIGLASNRLFGVNASGSPTNRLIEETDERLAINENNSSMNATNNTFSTILSNPNFANNLLIQKLNLPTSATVANNSQTNTSPQLSPQSKTDESVLNRLESLATKAHAINLFADVKFSQLIPSPPSSDALDDDLLHQNDMLPPKIVKSISEEGVVLYVKTLSLLAKGMVIASDWWYSQFEIDDPSNKNSNENPLKQSSNNNSDDLSLAVRINELVQWIREKFNECLEKAEFIRLTLQEANTLLSNEDSSEYMGNSNSVADKTRVVAEKLIFDRALEMSRNAAVNELVKEDLKGCELAYSTAIWMLEALLDEDSSNDEDRLDDEDKAMVEKFIVSIGNRLSVLKRKLEVV.

A Protein kinase domain is found at 22-318 (YSIGPEIGKG…FNEFFNDPLI (297 aa)). ATP-binding positions include 28–36 (IGKGSFATV) and Lys-51. Asp-168 serves as the catalytic Proton acceptor. Basic and acidic residues predominate over residues 367 to 379 (EKSKQDLPAREVS). Disordered stretches follow at residues 367-422 (EKSK…QPHN) and 470-515 (INPR…DRRI). Residues 380-389 (THASESQTKA) are compositionally biased toward polar residues. Over residues 390–405 (VDTRPSSRDEEIKEII) the composition is skewed to basic and acidic residues. 3 stretches are compositionally biased toward polar residues: residues 406–420 (NKNS…SIQP), 473–490 (RRTS…NNMQ), and 497–508 (LRSNSSGSQRRP).

Belongs to the protein kinase superfamily. Ser/Thr protein kinase family. APG1/unc-51/ULK1 subfamily. Homodimer. Forms a ternary complex with ATG13 and ATG17.

The protein resides in the cytoplasm. It localises to the preautophagosomal structure membrane. The catalysed reaction is L-seryl-[protein] + ATP = O-phospho-L-seryl-[protein] + ADP + H(+). It catalyses the reaction L-threonyl-[protein] + ATP = O-phospho-L-threonyl-[protein] + ADP + H(+). Its function is as follows. Serine/threonine protein kinase involved in the cytoplasm to vacuole transport (Cvt) and found to be essential in autophagy, where it is required for the formation of autophagosomes. Involved in the clearance of protein aggregates which cannot be efficiently cleared by the proteasome. Required for selective autophagic degradation of the nucleus (nucleophagy) as well as for mitophagy which contributes to regulate mitochondrial quantity and quality by eliminating the mitochondria to a basal level to fulfill cellular energy requirements and preventing excess ROS production. Also involved in endoplasmic reticulum-specific autophagic process, in selective removal of ER-associated degradation (ERAD) substrates. Plays a key role in ATG9 and ATG23 cycling through the pre-autophagosomal structure and is necessary to promote ATG18 binding to ATG9 through phosphorylation of ATG9. Catalyzes phosphorylation of ATG4, decreasing the interaction between ATG4 and ATG8 and impairing deconjugation of PE-conjugated forms of ATG8. The polypeptide is Serine/threonine-protein kinase ATG1 (Debaryomyces hansenii (strain ATCC 36239 / CBS 767 / BCRC 21394 / JCM 1990 / NBRC 0083 / IGC 2968) (Yeast)).